Here is a 775-residue protein sequence, read N- to C-terminus: Melanoma-associated antigen D1 (775 aa).

The disordered stretch occupies residues 37 to 330; sequence SEAPPTSQAT…PARQTPSAWQ (294 aa). The span at 39 to 50 shows a compositional bias: low complexity; it reads APPTSQATAAAS. 6 stretches are compositionally biased toward polar residues: residues 52 to 63, 84 to 100, 150 to 180, 223 to 237, 250 to 260, and 297 to 330; these read PNASPQSSQPPT, KAQN…SQAR, GQNT…NQPK, AQTS…NVES, NNLNVEENSNG, and LAWQ…SAWQ. Tandem repeats lie at residues 293 to 298, 299 to 304, 305 to 310, 329 to 334, 335 to 340, 341 to 346, 347 to 352, 353 to 358, 359 to 364, 365 to 370, 371 to 376, 377 to 382, 383 to 388, 389 to 394, 395 to 400, 401 to 406, 407 to 412, 413 to 418, and 419 to 424. The segment at 293-441 is 22 X 6 AA tandem repeats of W-[PQ]-X-P-X-X; that stretch reads WQTPLAWQNP…IPPDWQNLRP (149 aa). The tract at residues 374–407 is disordered; that stretch reads TPGWQSPPSWQAPPSWQSPQDWQGPPDWQLPPDW. Over residues 375–406 the composition is skewed to low complexity; sequence PGWQSPPSWQAPPSWQSPQDWQGPPDWQLPPD. A 20; approximate repeat occupies 425-429; it reads WIPAD. 2 repeat units span residues 430–435 and 436–441. Residues 437-452 show a composition bias toward low complexity; sequence QNLRPSPNLRSSPNSR. The segment at 437–463 is disordered; sequence QNLRPSPNLRSSPNSRASQNQGPPQPR. The MAGE domain maps to 468–666; it reads LQERANKLVK…RDWTAQFMEA (199 aa).

Interacts with DLX5, DLX7 and MSX2 and forms homomultimers. Interacts with UNC5A. Interacts with TRIM28 and PJA1. Interacts with NGFR/p75NTR and RORA. Ubiquitous and in the seminiferous tubules expressed in Sertoli cells but not in germ cells. Expression decreases in all tissues with increased age and is detectable only in brain cortex and lung.

The protein localises to the cytoplasm. It localises to the cell membrane. It is found in the nucleus. Its function is as follows. Involved in the apoptotic response after nerve growth factor (NGF) binding in neuronal cells. Inhibits cell cycle progression, and facilitates NGFR-mediated apoptosis. May act as a regulator of the function of DLX family members. May enhance ubiquitin ligase activity of RING-type zinc finger-containing E3 ubiquitin-protein ligases. Proposed to act through recruitment and/or stabilization of the Ubl-conjugating enzyme (E2) at the E3:substrate complex. Plays a role in the circadian rhythm regulation. May act as RORA co-regulator, modulating the expression of core clock genes such as BMAL1 and NFIL3, induced, or NR1D1, repressed. The protein is Melanoma-associated antigen D1 (Maged1) of Rattus norvegicus (Rat).